The sequence spans 554 residues: Formate--tetrahydrofolate ligase (554 aa).

64-71 lines the ATP pocket; it reads TPAGEGKS.

This sequence belongs to the formate--tetrahydrofolate ligase family.

It carries out the reaction (6S)-5,6,7,8-tetrahydrofolate + formate + ATP = (6R)-10-formyltetrahydrofolate + ADP + phosphate. Its pathway is one-carbon metabolism; tetrahydrofolate interconversion. The protein is Formate--tetrahydrofolate ligase of Leuconostoc citreum (strain KM20).